Reading from the N-terminus, the 67-residue chain is DNA-directed RNA polymerases I, II, and III subunit RPABC5 (67 aa).

Residues Cys-7, Cys-10, Cys-44, and Cys-45 each contribute to the Zn(2+) site.

The protein belongs to the archaeal Rpo10/eukaryotic RPB10 RNA polymerase subunit family. In terms of assembly, component of the RNA polymerase I (Pol I), RNA polymerase II (Pol II) and RNA polymerase III (Pol III) complexes consisting of at least 13, 12 and 17 subunits, respectively.

It localises to the nucleus. DNA-dependent RNA polymerase catalyzes the transcription of DNA into RNA using the four ribonucleoside triphosphates as substrates. Common component of RNA polymerases I, II and III which synthesize ribosomal RNA precursors, mRNA precursors and many functional non-coding RNAs, and a small RNAs, such as 5S rRNA and tRNAs, respectively. Pol II is the central component of the basal RNA polymerase II transcription machinery. Pols are composed of mobile elements that move relative to each other. In Pol II, Polr2L is part of the core element with the central large cleft. This chain is DNA-directed RNA polymerases I, II, and III subunit RPABC5, found in Drosophila melanogaster (Fruit fly).